The primary structure comprises 484 residues: Glycogen synthase (484 aa).

Residue Lys15 participates in ADP-alpha-D-glucose binding.

The protein belongs to the glycosyltransferase 1 family. Bacterial/plant glycogen synthase subfamily.

It carries out the reaction [(1-&gt;4)-alpha-D-glucosyl](n) + ADP-alpha-D-glucose = [(1-&gt;4)-alpha-D-glucosyl](n+1) + ADP + H(+). Its pathway is glycan biosynthesis; glycogen biosynthesis. Synthesizes alpha-1,4-glucan chains using ADP-glucose. This chain is Glycogen synthase, found in Bacillus licheniformis (strain ATCC 14580 / DSM 13 / JCM 2505 / CCUG 7422 / NBRC 12200 / NCIMB 9375 / NCTC 10341 / NRRL NRS-1264 / Gibson 46).